The following is a 248-amino-acid chain: Ethylene-responsive transcription factor ERF026 (248 aa).

Residues Val-89–Pro-145 constitute a DNA-binding region (AP2/ERF). Residues Pro-225 to Tyr-248 form a disordered region.

Belongs to the AP2/ERF transcription factor family. ERF subfamily.

Its subcellular location is the nucleus. Its function is as follows. Probably acts as a transcriptional activator. Binds to the GCC-box pathogenesis-related promoter element. May be involved in the regulation of gene expression by stress factors and by components of stress signal transduction pathways. The sequence is that of Ethylene-responsive transcription factor ERF026 (ERF026) from Arabidopsis thaliana (Mouse-ear cress).